The sequence spans 205 residues: Holliday junction resolvase RecU (205 aa).

The Mg(2+) site is built by T83, D85, E98, and Q117.

Belongs to the RecU family. It depends on Mg(2+) as a cofactor.

Its subcellular location is the cytoplasm. It catalyses the reaction Endonucleolytic cleavage at a junction such as a reciprocal single-stranded crossover between two homologous DNA duplexes (Holliday junction).. Functionally, endonuclease that resolves Holliday junction intermediates in genetic recombination. Cleaves mobile four-strand junctions by introducing symmetrical nicks in paired strands. Promotes annealing of linear ssDNA with homologous dsDNA. Required for DNA repair, homologous recombination and chromosome segregation. The polypeptide is Holliday junction resolvase RecU (Streptococcus suis (strain 98HAH33)).